Reading from the N-terminus, the 239-residue chain is Pyridoxine 5'-phosphate synthase (239 aa).

Residue Asn7 participates in 3-amino-2-oxopropyl phosphate binding. 9-10 provides a ligand contact to 1-deoxy-D-xylulose 5-phosphate; it reads DH. Arg18 lines the 3-amino-2-oxopropyl phosphate pocket. Catalysis depends on His43, which acts as the Proton acceptor. Residues Arg45 and His50 each coordinate 1-deoxy-D-xylulose 5-phosphate. Glu70 serves as the catalytic Proton acceptor. Thr100 is a 1-deoxy-D-xylulose 5-phosphate binding site. His191 acts as the Proton donor in catalysis. Residues Gly192 and 213–214 contribute to the 3-amino-2-oxopropyl phosphate site; that span reads GH.

It belongs to the PNP synthase family. As to quaternary structure, homooctamer; tetramer of dimers.

The protein resides in the cytoplasm. The catalysed reaction is 3-amino-2-oxopropyl phosphate + 1-deoxy-D-xylulose 5-phosphate = pyridoxine 5'-phosphate + phosphate + 2 H2O + H(+). The protein operates within cofactor biosynthesis; pyridoxine 5'-phosphate biosynthesis; pyridoxine 5'-phosphate from D-erythrose 4-phosphate: step 5/5. Functionally, catalyzes the complicated ring closure reaction between the two acyclic compounds 1-deoxy-D-xylulose-5-phosphate (DXP) and 3-amino-2-oxopropyl phosphate (1-amino-acetone-3-phosphate or AAP) to form pyridoxine 5'-phosphate (PNP) and inorganic phosphate. The chain is Pyridoxine 5'-phosphate synthase from Citrifermentans bemidjiense (strain ATCC BAA-1014 / DSM 16622 / JCM 12645 / Bem) (Geobacter bemidjiensis).